The sequence spans 171 residues: uncharacterized protein (171 aa).

Belongs to the transferase hexapeptide repeat family.

This is an uncharacterized protein from Bacillus subtilis (strain 168).